A 443-amino-acid polypeptide reads, in one-letter code: Thymidine phosphorylase (443 aa).

The protein belongs to the thymidine/pyrimidine-nucleoside phosphorylase family. In terms of assembly, homodimer.

The catalysed reaction is thymidine + phosphate = 2-deoxy-alpha-D-ribose 1-phosphate + thymine. The protein operates within pyrimidine metabolism; dTMP biosynthesis via salvage pathway; dTMP from thymine: step 1/2. Functionally, the enzymes which catalyze the reversible phosphorolysis of pyrimidine nucleosides are involved in the degradation of these compounds and in their utilization as carbon and energy sources, or in the rescue of pyrimidine bases for nucleotide synthesis. In Shewanella pealeana (strain ATCC 700345 / ANG-SQ1), this protein is Thymidine phosphorylase.